Reading from the N-terminus, the 22-residue chain is 2.4 kDa venom peptide (22 aa).

Post-translationally, contains 2 disulfide bonds. In terms of tissue distribution, expressed by the venom gland.

The protein resides in the secreted. Functionally, not lethal to mice by intraperitoneal or intracerebroventricular injections in doses up to 150 micrograms. The sequence is that of 2.4 kDa venom peptide from Heterometrus spinifer (Asia giant forest scorpion).